We begin with the raw amino-acid sequence, 193 residues long: Putative manganese efflux pump MntP (193 aa).

6 consecutive transmembrane segments (helical) span residues 3-23 (PLSI…AAIG), 37-57 (VRAG…GWML), 66-86 (AAFD…HMIV), 109-131 (LALA…SLAF), 146-166 (CTLS…ALIG), and 171-191 (ILGG…HLSG).

This sequence belongs to the MntP (TC 9.B.29) family.

The protein localises to the cell inner membrane. Functionally, probably functions as a manganese efflux pump. The sequence is that of Putative manganese efflux pump MntP from Xanthomonas campestris pv. campestris (strain 8004).